A 552-amino-acid polypeptide reads, in one-letter code: Serine/threonine-protein kinase RIO2 (552 aa).

In terms of domain architecture, Protein kinase spans 97–272 (VGNQMGVGKE…DRDVKCIKDF (176 aa)). Lys123 contacts ATP. Asp228 (proton acceptor) is an active-site residue. Phosphoserine occurs at positions 332, 335, 337, 350, 362, 380, 382, 385, and 390. A Nuclear export signal motif is present at residues 399–408 (ALEEIKGQVV). Ser412, Ser417, and Ser442 each carry phosphoserine. Tyr445 is subject to Phosphotyrosine. Ser548 bears the Phosphoserine mark.

This sequence belongs to the protein kinase superfamily. RIO-type Ser/Thr kinase family. In terms of assembly, associated with late 40S pre-ribosomal particles. Interacts with PLK1 (via its N-terminus). It depends on Mg(2+) as a cofactor. Autophosphorylated (in vitro). Phosphorylation at Ser-335, Ser-380, Ser-548 by PLK1 affects the timing of the metaphase-anaphase transition.

The protein resides in the cytoplasm. It carries out the reaction L-seryl-[protein] + ATP = O-phospho-L-seryl-[protein] + ADP + H(+). The catalysed reaction is L-threonyl-[protein] + ATP = O-phospho-L-threonyl-[protein] + ADP + H(+). Its function is as follows. Serine/threonine-protein kinase involved in the final steps of cytoplasmic maturation of the 40S ribosomal subunit. Involved in export of the 40S pre-ribosome particles (pre-40S) from the nucleus to the cytoplasm. Its kinase activity is required for the release of NOB1, PNO1 and LTV1 from the late pre-40S and the processing of 18S-E pre-rRNA to the mature 18S rRNA. Regulates the timing of the metaphase-anaphase transition during mitotic progression, and its phosphorylation, most likely by PLK1, regulates this function. The sequence is that of Serine/threonine-protein kinase RIO2 from Homo sapiens (Human).